Here is a 195-residue protein sequence, read N- to C-terminus: Peptide deformylase (195 aa).

Cysteine 102 and histidine 144 together coordinate Fe cation. Glutamate 145 is an active-site residue. Histidine 148 lines the Fe cation pocket.

Belongs to the polypeptide deformylase family. The cofactor is Fe(2+).

The enzyme catalyses N-terminal N-formyl-L-methionyl-[peptide] + H2O = N-terminal L-methionyl-[peptide] + formate. In terms of biological role, removes the formyl group from the N-terminal Met of newly synthesized proteins. Requires at least a dipeptide for an efficient rate of reaction. N-terminal L-methionine is a prerequisite for activity but the enzyme has broad specificity at other positions. The sequence is that of Peptide deformylase from Salinibacter ruber (strain DSM 13855 / M31).